We begin with the raw amino-acid sequence, 88 residues long: Sec-independent protein translocase protein TatA (88 aa).

Residues 1 to 21 (MGGASIWHWIVVGVIVMLLFG) traverse the membrane as a helical segment. Residues 62–88 (TEPVRTLPPHPTEPAPATHATVDRKVV) form a disordered region.

This sequence belongs to the TatA/E family. As to quaternary structure, the Tat system comprises two distinct complexes: a TatABC complex, containing multiple copies of TatA, TatB and TatC subunits, and a separate TatA complex, containing only TatA subunits. Substrates initially bind to the TatABC complex, which probably triggers association of the separate TatA complex to form the active translocon.

It localises to the cell inner membrane. In terms of biological role, part of the twin-arginine translocation (Tat) system that transports large folded proteins containing a characteristic twin-arginine motif in their signal peptide across membranes. TatA could form the protein-conducting channel of the Tat system. This chain is Sec-independent protein translocase protein TatA, found in Methylobacterium sp. (strain 4-46).